The primary structure comprises 441 residues: Transcription factor bHLH90 (441 aa).

A bHLH domain is found at Asn-260–Leu-309.

As to quaternary structure, homodimer. As to expression, expressed constitutively in roots, leaves, stems, and flowers.

It is found in the nucleus. The sequence is that of Transcription factor bHLH90 (BHLH90) from Arabidopsis thaliana (Mouse-ear cress).